Here is a 571-residue protein sequence, read N- to C-terminus: Proline--tRNA ligase (571 aa).

This sequence belongs to the class-II aminoacyl-tRNA synthetase family. ProS type 1 subfamily. Homodimer.

Its subcellular location is the cytoplasm. It carries out the reaction tRNA(Pro) + L-proline + ATP = L-prolyl-tRNA(Pro) + AMP + diphosphate. In terms of biological role, catalyzes the attachment of proline to tRNA(Pro) in a two-step reaction: proline is first activated by ATP to form Pro-AMP and then transferred to the acceptor end of tRNA(Pro). As ProRS can inadvertently accommodate and process non-cognate amino acids such as alanine and cysteine, to avoid such errors it has two additional distinct editing activities against alanine. One activity is designated as 'pretransfer' editing and involves the tRNA(Pro)-independent hydrolysis of activated Ala-AMP. The other activity is designated 'posttransfer' editing and involves deacylation of mischarged Ala-tRNA(Pro). The misacylated Cys-tRNA(Pro) is not edited by ProRS. The protein is Proline--tRNA ligase of Ectopseudomonas mendocina (strain ymp) (Pseudomonas mendocina).